The chain runs to 140 residues: Sex-regulated protein janus-B (140 aa).

R42 is a substrate binding site. The Proton acceptor role is filled by H69. A substrate-binding site is contributed by 110–112 (SRT).

It belongs to the janus family.

In terms of biological role, janA and janB regulate somatic sex differentiation. This Drosophila orena (Fruit fly) protein is Sex-regulated protein janus-B (janB).